A 78-amino-acid chain; its full sequence is Acyl carrier protein (78 aa).

Residues Ser2–Ala77 form the Carrier domain. At Ser37 the chain carries O-(pantetheine 4'-phosphoryl)serine.

The protein belongs to the acyl carrier protein (ACP) family. Post-translationally, 4'-phosphopantetheine is transferred from CoA to a specific serine of apo-ACP by AcpS. This modification is essential for activity because fatty acids are bound in thioester linkage to the sulfhydryl of the prosthetic group.

The protein resides in the cytoplasm. The protein operates within lipid metabolism; fatty acid biosynthesis. In terms of biological role, carrier of the growing fatty acid chain in fatty acid biosynthesis. The chain is Acyl carrier protein from Vibrio vulnificus (strain CMCP6).